Reading from the N-terminus, the 373-residue chain is Centrosomal protein of 41 kDa (373 aa).

The segment at Leu91 to Ser137 is disordered. Residues Ser96 and Ser99 each carry the phosphoserine modification. Position 109 is a phosphothreonine (Thr109). 2 positions are modified to phosphoserine: Ser114 and Ser121. Residues Glu116–Ser137 are compositionally biased toward polar residues. In terms of domain architecture, Rhodanese spans Pro169–Val266. Positions Asp317–Lys373 are disordered. Over residues Ser325–Gly334 the composition is skewed to polar residues. Arg343 is subject to Omega-N-methylarginine. Residues Asn347–His366 show a composition bias toward polar residues.

This sequence belongs to the CEP41 family. As to quaternary structure, found in a complex with TTLL6.

Its subcellular location is the cytoplasm. The protein resides in the cytoskeleton. It localises to the microtubule organizing center. It is found in the centrosome. The protein localises to the cell projection. Its subcellular location is the cilium. The protein resides in the cilium basal body. Required during ciliogenesis for tubulin glutamylation in cilium. Probably acts by participating in the transport of TTLL6, a tubulin polyglutamylase, between the basal body and the cilium. This chain is Centrosomal protein of 41 kDa (Cep41), found in Mus musculus (Mouse).